The following is a 301-amino-acid chain: F1 operon positive regulatory protein (301 aa).

The HTH araC/xylS-type domain occupies N8–I107. 2 DNA-binding regions (H-T-H motif) span residues D26–V47 and I74–F97.

Functionally, positive regulator of F1 operon expression. This is F1 operon positive regulatory protein (caf1R) from Yersinia pestis.